The chain runs to 239 residues: Adapter protein MecA (239 aa).

Positions 118-128 are enriched in basic and acidic residues; it reads EQRTKEKEAQG. A disordered region spans residues 118–137; it reads EQRTKEKEAQGSKRQKSSAR.

It belongs to the MecA family. Homodimer.

Its function is as follows. Enables the recognition and targeting of unfolded and aggregated proteins to the ClpC protease or to other proteins involved in proteolysis. The sequence is that of Adapter protein MecA from Staphylococcus aureus (strain USA300).